The sequence spans 172 residues: Inorganic pyrophosphatase (172 aa).

Positions 26, 40, and 52 each coordinate substrate. D62, D67, and D99 together coordinate Mg(2+). Y138 provides a ligand contact to substrate.

Belongs to the PPase family. Homohexamer. Mg(2+) serves as cofactor.

It is found in the cytoplasm. It catalyses the reaction diphosphate + H2O = 2 phosphate + H(+). In terms of biological role, catalyzes the hydrolysis of inorganic pyrophosphate (PPi) forming two phosphate ions. The protein is Inorganic pyrophosphatase of Saccharolobus solfataricus (strain ATCC 35092 / DSM 1617 / JCM 11322 / P2) (Sulfolobus solfataricus).